An 826-amino-acid polypeptide reads, in one-letter code: Ribonucleoside-diphosphate reductase large subunit (826 aa).

Substrate-binding positions include T171, 186–187 (SC), G217, 387–391 (NLCAE), and 594–598 (PTSGC). A disulfide bond links C187 and C403. N387 acts as the Proton acceptor in catalysis. C389 (cysteine radical intermediate) is an active-site residue. Residue E391 is the Proton acceptor of the active site. The segment at 747–769 (SVPREEQNERSPAEQMPPRPMEP) is disordered. Residues 749–758 (PREEQNERSP) are compositionally biased toward basic and acidic residues.

The protein belongs to the ribonucleoside diphosphate reductase large chain family. In terms of assembly, heterotetramer composed of a homodimer of the large subunit (R1) and a homodimer of the small subunit (R2). Larger multisubunit protein complex are also active, composed of (R1)n(R2)n.

It catalyses the reaction a 2'-deoxyribonucleoside 5'-diphosphate + [thioredoxin]-disulfide + H2O = a ribonucleoside 5'-diphosphate + [thioredoxin]-dithiol. Functionally, ribonucleoside-diphosphate reductase holoenzyme provides the precursors necessary for viral DNA synthesis. Allows virus growth in non-dividing cells, as well as reactivation from latency in infected hosts. Catalyzes the biosynthesis of deoxyribonucleotides from the corresponding ribonucleotides. The sequence is that of Ribonucleoside-diphosphate reductase large subunit from Homo sapiens (Human).